A 355-amino-acid chain; its full sequence is UDP-N-acetylglucosamine--N-acetylmuramyl-(pentapeptide) pyrophosphoryl-undecaprenol N-acetylglucosamine transferase (355 aa).

Residues 15–17, asparagine 127, arginine 163, serine 191, isoleucine 244, 263–268, and glutamine 288 contribute to the UDP-N-acetyl-alpha-D-glucosamine site; these read TGG and ALTVSE.

The protein belongs to the glycosyltransferase 28 family. MurG subfamily.

It is found in the cell inner membrane. The catalysed reaction is di-trans,octa-cis-undecaprenyl diphospho-N-acetyl-alpha-D-muramoyl-L-alanyl-D-glutamyl-meso-2,6-diaminopimeloyl-D-alanyl-D-alanine + UDP-N-acetyl-alpha-D-glucosamine = di-trans,octa-cis-undecaprenyl diphospho-[N-acetyl-alpha-D-glucosaminyl-(1-&gt;4)]-N-acetyl-alpha-D-muramoyl-L-alanyl-D-glutamyl-meso-2,6-diaminopimeloyl-D-alanyl-D-alanine + UDP + H(+). Its pathway is cell wall biogenesis; peptidoglycan biosynthesis. Its function is as follows. Cell wall formation. Catalyzes the transfer of a GlcNAc subunit on undecaprenyl-pyrophosphoryl-MurNAc-pentapeptide (lipid intermediate I) to form undecaprenyl-pyrophosphoryl-MurNAc-(pentapeptide)GlcNAc (lipid intermediate II). The sequence is that of UDP-N-acetylglucosamine--N-acetylmuramyl-(pentapeptide) pyrophosphoryl-undecaprenol N-acetylglucosamine transferase from Salmonella dublin (strain CT_02021853).